Consider the following 638-residue polypeptide: MVVSADPLSSERAEMNILEINQELRSQLAESNQQFRDLKEKFLITQATAYSLANQLKKYKCEEYKDIIDSVLRDELQSMEKLAEKLRQAEELRQYKALVHSQAKELTQLREKLREGRDASRWLNKHLKTLLTPDDPDKSQGQDLREQLAEGHRLAEHLVHKLSPENDEDEDEDEDDKDEEVEKVQESPAPREVQKTEEKEVPQDSLEECAVTCSNSHNPSNSNQPHRSTKITFKEHEVDSALVVESEHPHDEEEEALNIPPENQNDHEEEEGKAPVPPRHHDKSNSYRHREVSFLALDEQKVCSAQDVARDYSNPKWDETSLGFLEKQSDLEEVKGQETVAPRLSRGPLRVDKHEIPQESLDGCCLTPSILPDLTPSYHPYWSTLYSFEDKQVSLALVDKIKKDQEEIEDQSPPCPRLSQELPEVKEQEVPEDSVNEVYLTPSVHHDVSDCHQPYSSTLSSLEDQLACSALDVASPTEAACPQGTWSGDLSHHRSEVQISQAQLEPSTLVPSCLRLQLDQGFHCGNGLAQRGLSSTTCSFSANADSGNQWPFQELVLEPSLGMKNPPQLEDDALEGSASNTQGRQVTGRIRASLVLILKTIRRRLPFSKWRLAFRFAGPHAESAEIPNTAERMQRMIG.

Coiled coils occupy residues 10–43 and 69–115; these read SERA…EKFL and DSVL…KLRE. Residues 157 to 285 are disordered; it reads HLVHKLSPEN…VPPRHHDKSN (129 aa). Residues 165-179 show a composition bias toward acidic residues; sequence ENDEDEDEDEDDKDE. Positions 174 to 261 constitute an Olduvai 1 domain; the sequence is EDDKDEEVEK…EEEEALNIPP (88 aa). Residues 192–202 show a composition bias toward basic and acidic residues; it reads EVQKTEEKEVP. Low complexity predominate over residues 214–226; it reads SNSHNPSNSNQPH. Basic and acidic residues-rich tracts occupy residues 232–251 and 264–273; these read TFKE…HPHD and QNDHEEEEGK. Olduvai domains follow at residues 326-399 and 400-503; these read EKQS…ALVD and KIKK…SQAQ. Positions 563-584 are disordered; that stretch reads MKNPPQLEDDALEGSASNTQGR.

The protein belongs to the NBPF family.

Its subcellular location is the cytoplasm. This chain is NBPF family member NBPF6, found in Homo sapiens (Human).